Here is a 603-residue protein sequence, read N- to C-terminus: Aspartate--tRNA(Asp/Asn) ligase (603 aa).

The segment at glutamine 205–lysine 208 is aspartate. Arginine 227 serves as a coordination point for L-aspartate. Residues arginine 227–glutamate 229 and glutamine 236 contribute to the ATP site. Residue histidine 463 participates in L-aspartate binding. An ATP-binding site is contributed by glutamate 497. Arginine 504 is a binding site for L-aspartate. Glycine 549 to arginine 552 serves as a coordination point for ATP.

Belongs to the class-II aminoacyl-tRNA synthetase family. Type 1 subfamily. As to quaternary structure, homodimer.

It localises to the cytoplasm. It catalyses the reaction tRNA(Asx) + L-aspartate + ATP = L-aspartyl-tRNA(Asx) + AMP + diphosphate. In terms of biological role, aspartyl-tRNA synthetase with relaxed tRNA specificity since it is able to aspartylate not only its cognate tRNA(Asp) but also tRNA(Asn). Reaction proceeds in two steps: L-aspartate is first activated by ATP to form Asp-AMP and then transferred to the acceptor end of tRNA(Asp/Asn). The sequence is that of Aspartate--tRNA(Asp/Asn) ligase from Anaeromyxobacter dehalogenans (strain 2CP-1 / ATCC BAA-258).